We begin with the raw amino-acid sequence, 647 residues long: DNA ligase (647 aa).

Residues 30-34 (DEEYD), 79-80 (SM), and Glu105 contribute to the NAD(+) site. Residue Lys107 is the N6-AMP-lysine intermediate of the active site. Arg128, Glu162, and Lys301 together coordinate NAD(+). Residues Cys395, Cys398, Cys411, and Cys416 each contribute to the Zn(2+) site. One can recognise a BRCT domain in the interval 570–647 (KSDGVIFGKT…ESAFNELVKE (78 aa)).

The protein belongs to the NAD-dependent DNA ligase family. LigA subfamily. Mg(2+) is required as a cofactor. Requires Mn(2+) as cofactor.

The enzyme catalyses NAD(+) + (deoxyribonucleotide)n-3'-hydroxyl + 5'-phospho-(deoxyribonucleotide)m = (deoxyribonucleotide)n+m + AMP + beta-nicotinamide D-nucleotide.. DNA ligase that catalyzes the formation of phosphodiester linkages between 5'-phosphoryl and 3'-hydroxyl groups in double-stranded DNA using NAD as a coenzyme and as the energy source for the reaction. It is essential for DNA replication and repair of damaged DNA. In Campylobacter jejuni subsp. jejuni serotype O:6 (strain 81116 / NCTC 11828), this protein is DNA ligase.